We begin with the raw amino-acid sequence, 346 residues long: Probable alcohol dehydrogenase AdhA (346 aa).

Zn(2+)-binding residues include cysteine 51, histidine 73, cysteine 109, cysteine 112, cysteine 115, cysteine 123, and cysteine 165.

It belongs to the zinc-containing alcohol dehydrogenase family. Zn(2+) serves as cofactor.

The enzyme catalyses a primary alcohol + NAD(+) = an aldehyde + NADH + H(+). The catalysed reaction is a secondary alcohol + NAD(+) = a ketone + NADH + H(+). This is Probable alcohol dehydrogenase AdhA (adhA) from Mycobacterium tuberculosis (strain CDC 1551 / Oshkosh).